The chain runs to 463 residues: ATP-dependent protease ATPase subunit HslU (463 aa).

ATP-binding positions include Ile-19, 61 to 66 (GVGKTE), Asp-277, Glu-341, and Arg-413.

The protein belongs to the ClpX chaperone family. HslU subfamily. As to quaternary structure, a double ring-shaped homohexamer of HslV is capped on each side by a ring-shaped HslU homohexamer. The assembly of the HslU/HslV complex is dependent on binding of ATP.

It localises to the cytoplasm. Functionally, ATPase subunit of a proteasome-like degradation complex; this subunit has chaperone activity. The binding of ATP and its subsequent hydrolysis by HslU are essential for unfolding of protein substrates subsequently hydrolyzed by HslV. HslU recognizes the N-terminal part of its protein substrates and unfolds these before they are guided to HslV for hydrolysis. The sequence is that of ATP-dependent protease ATPase subunit HslU from Bacillus cereus (strain 03BB102).